Consider the following 167-residue polypeptide: UPF0225 protein VV1358 (167 aa).

The protein belongs to the UPF0225 family.

The polypeptide is UPF0225 protein VV1358 (Vibrio vulnificus (strain YJ016)).